The primary structure comprises 294 residues: Acetyl-coenzyme A carboxylase carboxyl transferase subunit beta (294 aa).

The CoA carboxyltransferase N-terminal domain occupies Val-25–His-294. The Zn(2+) site is built by Cys-29, Cys-32, Cys-48, and Cys-51. The C4-type zinc finger occupies Cys-29–Cys-51.

This sequence belongs to the AccD/PCCB family. Acetyl-CoA carboxylase is a heterohexamer composed of biotin carboxyl carrier protein (AccB), biotin carboxylase (AccC) and two subunits each of ACCase subunit alpha (AccA) and ACCase subunit beta (AccD). Zn(2+) is required as a cofactor.

It localises to the cytoplasm. The enzyme catalyses N(6)-carboxybiotinyl-L-lysyl-[protein] + acetyl-CoA = N(6)-biotinyl-L-lysyl-[protein] + malonyl-CoA. It functions in the pathway lipid metabolism; malonyl-CoA biosynthesis; malonyl-CoA from acetyl-CoA: step 1/1. Component of the acetyl coenzyme A carboxylase (ACC) complex. Biotin carboxylase (BC) catalyzes the carboxylation of biotin on its carrier protein (BCCP) and then the CO(2) group is transferred by the transcarboxylase to acetyl-CoA to form malonyl-CoA. This chain is Acetyl-coenzyme A carboxylase carboxyl transferase subunit beta, found in Aliivibrio fischeri (strain MJ11) (Vibrio fischeri).